The primary structure comprises 550 residues: Glucose-6-phosphate isomerase (550 aa).

Residue Glu-356 is the Proton donor of the active site. Catalysis depends on residues His-387 and Lys-515.

This sequence belongs to the GPI family.

It is found in the cytoplasm. The catalysed reaction is alpha-D-glucose 6-phosphate = beta-D-fructose 6-phosphate. It participates in carbohydrate biosynthesis; gluconeogenesis. It functions in the pathway carbohydrate degradation; glycolysis; D-glyceraldehyde 3-phosphate and glycerone phosphate from D-glucose: step 2/4. Its function is as follows. Catalyzes the reversible isomerization of glucose-6-phosphate to fructose-6-phosphate. The sequence is that of Glucose-6-phosphate isomerase from Vibrio atlanticus (strain LGP32) (Vibrio splendidus (strain Mel32)).